We begin with the raw amino-acid sequence, 266 residues long: 2-Cys peroxiredoxin BAS1, chloroplastic (266 aa).

Low complexity predominate over residues 1–16 (MASVASSTTLISSPSS). Residues 1-25 (MASVASSTTLISSPSSRVFPAKSSL) are disordered. The transit peptide at 1–65 (MASVASSTTL…SSTSRRSFAV (65 aa)) directs the protein to the chloroplast. The 160-residue stretch at 73 to 232 (PLVGNKAPDF…TMRTLQALQY (160 aa)) folds into the Thioredoxin domain. The Cysteine sulfenic acid (-SOH) intermediate role is filled by Cys-119.

It belongs to the peroxiredoxin family. AhpC/Prx1 subfamily. In terms of assembly, homodimer; disulfide-linked, upon oxidation. Interacts with the plastidial thioredoxin CDSP32. Interacts with the plastidial NADPH-dependent thioredoxin reductase ANTR-C.

It localises to the plastid. The protein localises to the chloroplast. The enzyme catalyses a hydroperoxide + [thioredoxin]-dithiol = an alcohol + [thioredoxin]-disulfide + H2O. Thiol-specific peroxidase that catalyzes the reduction of hydrogen peroxide and organic hydroperoxides to water and alcohols, respectively. Plays a role in cell protection against oxidative stress by detoxifying peroxides. May be an antioxidant enzyme particularly in the developing shoot and photosynthesizing leaf. This is 2-Cys peroxiredoxin BAS1, chloroplastic (BAS1) from Arabidopsis thaliana (Mouse-ear cress).